Here is a 171-residue protein sequence, read N- to C-terminus: 3-hydroxydecanoyl-[acyl-carrier-protein] dehydratase (171 aa).

H71 is an active-site residue.

This sequence belongs to the thioester dehydratase family. FabA subfamily. In terms of assembly, homodimer.

Its subcellular location is the cytoplasm. It catalyses the reaction a (3R)-hydroxyacyl-[ACP] = a (2E)-enoyl-[ACP] + H2O. The enzyme catalyses (3R)-hydroxydecanoyl-[ACP] = (2E)-decenoyl-[ACP] + H2O. It carries out the reaction (2E)-decenoyl-[ACP] = (3Z)-decenoyl-[ACP]. It participates in lipid metabolism; fatty acid biosynthesis. Its function is as follows. Necessary for the introduction of cis unsaturation into fatty acids. Catalyzes the dehydration of (3R)-3-hydroxydecanoyl-ACP to E-(2)-decenoyl-ACP and then its isomerization to Z-(3)-decenoyl-ACP. Can catalyze the dehydratase reaction for beta-hydroxyacyl-ACPs with saturated chain lengths up to 16:0, being most active on intermediate chain length. This Rhizobium meliloti (strain 1021) (Ensifer meliloti) protein is 3-hydroxydecanoyl-[acyl-carrier-protein] dehydratase.